Consider the following 140-residue polypeptide: FLYWCH family member 2 (140 aa).

Disordered stretches follow at residues 1 to 39 (MPLP…PREF) and 83 to 140 (THPE…GKSL). Serine 21 is modified (phosphoserine). Residues 98-114 (PEQKRSRQDPGADRTED) are compositionally biased toward basic and acidic residues. Residues 118–127 (AAGPPEAAGE) are compositionally biased toward low complexity.

In Pongo abelii (Sumatran orangutan), this protein is FLYWCH family member 2 (FLYWCH2).